The sequence spans 372 residues: DNA-directed RNA polymerase subunit alpha (372 aa).

An alpha N-terminal domain (alpha-NTD) region spans residues 1-268 (MIFDEDSNSV…DQFQPFINFD (268 aa)). The segment at 280–372 (KDALPYDSNL…ESLSKQYSEE (93 aa)) is alpha C-terminal domain (alpha-CTD).

Belongs to the RNA polymerase alpha chain family. In terms of assembly, homodimer. The RNAP catalytic core consists of 2 alpha, 1 beta, 1 beta' and 1 omega subunit. When a sigma factor is associated with the core the holoenzyme is formed, which can initiate transcription.

It catalyses the reaction RNA(n) + a ribonucleoside 5'-triphosphate = RNA(n+1) + diphosphate. Its function is as follows. DNA-dependent RNA polymerase catalyzes the transcription of DNA into RNA using the four ribonucleoside triphosphates as substrates. This is DNA-directed RNA polymerase subunit alpha from Ehrlichia canis (strain Jake).